A 423-amino-acid chain; its full sequence is Gamma-glutamyl phosphate reductase (423 aa).

It belongs to the gamma-glutamyl phosphate reductase family.

It is found in the cytoplasm. It carries out the reaction L-glutamate 5-semialdehyde + phosphate + NADP(+) = L-glutamyl 5-phosphate + NADPH + H(+). It participates in amino-acid biosynthesis; L-proline biosynthesis; L-glutamate 5-semialdehyde from L-glutamate: step 2/2. Its function is as follows. Catalyzes the NADPH-dependent reduction of L-glutamate 5-phosphate into L-glutamate 5-semialdehyde and phosphate. The product spontaneously undergoes cyclization to form 1-pyrroline-5-carboxylate. In Burkholderia orbicola (strain MC0-3), this protein is Gamma-glutamyl phosphate reductase.